The sequence spans 163 residues: Centrosomal protein of 19 kDa (163 aa).

This sequence belongs to the CEP19 family. As to quaternary structure, interacts with CEP43; this interaction is required for its localization to the mother centriole. Interacts (via residues 121-150) with RABL2B. Interacts (via C-terminus) with CEP350; this interaction is required for its localization to the mother centriole.

The protein resides in the cytoplasm. Its subcellular location is the cytoskeleton. It localises to the microtubule organizing center. It is found in the centrosome. The protein localises to the centriole. The protein resides in the spindle pole. Its subcellular location is the cilium basal body. Required for ciliation. Recruits the RABL2B GTPase to the ciliary base to initiate ciliation. After specifically capturing the activated GTP-bound RABL2B, the CEP19-RABL2B complex binds intraflagellar transport (IFT) complex B from the large pool pre-docked at the base of the cilium and thus triggers its entry into the cilia. Involved in the early steps in cilia formation by recruiting the ciliary vesicles (CVs) to the distal end of the mother centriole where they fuse to initiate cilium assembly. Involved in microtubule (MT) anchoring to the centrosomes. The chain is Centrosomal protein of 19 kDa (CEP19) from Homo sapiens (Human).